Reading from the N-terminus, the 352-residue chain is C-C chemokine receptor type 5 (352 aa).

Residues 1-30 (MDYQVSSPTYDIDYYTSEPCQKTNVKQIAA) are Extracellular-facing. Position 3 is a sulfotyrosine (Y3). O-linked (GalNAc...) serine glycosylation is found at S6 and S7. 3 positions are modified to sulfotyrosine: Y10, Y14, and Y15. Disulfide bonds link C20/C269 and C101/C178. The chain crosses the membrane as a helical span at residues 31 to 58 (RLLPPLYSLVFIFGFVGNMLVILILINC). The Cytoplasmic segment spans residues 59-68 (KRLKSMTDIY). A helical transmembrane segment spans residues 69 to 89 (LLNLAISDLFFLLTVPFWAHY). The Extracellular portion of the chain corresponds to 90 to 102 (AAAQWDFGNTMCQ). Residues 103-124 (LLTGLYFIGFFSGIFFIILLTI) traverse the membrane as a helical segment. Residues 125-141 (DRYLAIVHAVFALKART) lie on the Cytoplasmic side of the membrane. Residues 142–166 (VTFGVVTSVITWVVAVFASLPGIIF) form a helical membrane-spanning segment. At 167 to 198 (TRSQKEGLHYTCSSHFPYSQYQFWKNFQTLKI) the chain is on the extracellular side. A helical transmembrane segment spans residues 199-218 (VILGLVLPLLVMVICYSGIL). The Cytoplasmic portion of the chain corresponds to 219 to 235 (KTLLRCRNEKKRHRAVR). A helical membrane pass occupies residues 236–260 (LIFTIMIVYFLFWAPYNIVLLLNTF). Over 261–277 (QEFFGLNNCSSSNRLDQ) the chain is Extracellular. The chain crosses the membrane as a helical span at residues 278-301 (AMQVTETLGMTHCCINPIIYAFVG). Residues 302–352 (EKFRNYLLVFFQKHIAKRFCKCCSIFQQEAPERASSVYTRSTGEQEISVGL) lie on the Cytoplasmic side of the membrane. Residues C321, C323, and C324 are each lipidated (S-palmitoyl cysteine). S336, S337, S342, and S349 each carry phosphoserine; by BARK1.

The protein belongs to the G-protein coupled receptor 1 family. In terms of assembly, interacts with PRAF2. Efficient ligand binding to CCL3/MIP-1alpha and CCL4/MIP-1beta requires sulfation, O-glycosylation and sialic acid modifications. Glycosylation on Ser-6 is required for efficient binding of CCL4. Interacts with GRK2. Interacts with ARRB1 and ARRB2. Interacts with CNIH4. Interacts with S100A4; this interaction stimulates T-lymphocyte chemotaxis. Sulfated on at least 2 of the N-terminal tyrosines. Sulfation is required for efficient binding of the chemokines, CCL3 and CCL4. In terms of processing, palmitoylation in the C-terminal is important for cell surface expression. Post-translationally, phosphorylation on serine residues in the C-terminal is stimulated by binding CC chemokines especially by APO-RANTES. O-glycosylated, but not N-glycosylated. Ser-6 appears to be the major site even if Ser-7 may be also O-glycosylated. Also sialylated glycans present which contribute to chemokine binding. Thr-16 and Ser-17 may also be glycosylated and, if so, with small moieties such as a T-antigen.

Its subcellular location is the cell membrane. In terms of biological role, receptor for a number of inflammatory CC-chemokines including CCL3/MIP-1-alpha, CCL4/MIP-1-beta and RANTES and subsequently transduces a signal by increasing the intracellular calcium ion level. May play a role in the control of granulocytic lineage proliferation or differentiation. Participates in T-lymphocyte migration to the infection site by acting as a chemotactic receptor. In Gorilla gorilla gorilla (Western lowland gorilla), this protein is C-C chemokine receptor type 5 (CCR5).